A 263-amino-acid chain; its full sequence is Putative TATA-binding protein pB263R (263 aa).

This sequence belongs to the asfivirus B263R family.

In terms of biological role, putative TATA-binding protein. This is Putative TATA-binding protein pB263R from African swine fever virus (isolate Pig/Kenya/KEN-50/1950) (ASFV).